Reading from the N-terminus, the 923-residue chain is Alanine--tRNA ligase (923 aa).

Residues His-611, His-615, Cys-714, and His-718 each coordinate Zn(2+).

The protein belongs to the class-II aminoacyl-tRNA synthetase family. Zn(2+) serves as cofactor.

The protein resides in the cytoplasm. It carries out the reaction tRNA(Ala) + L-alanine + ATP = L-alanyl-tRNA(Ala) + AMP + diphosphate. Functionally, catalyzes the attachment of alanine to tRNA(Ala) in a two-step reaction: alanine is first activated by ATP to form Ala-AMP and then transferred to the acceptor end of tRNA(Ala). Also edits incorrectly charged Ser-tRNA(Ala) and Gly-tRNA(Ala) via its editing domain. The protein is Alanine--tRNA ligase of Methanosarcina barkeri (strain Fusaro / DSM 804).